A 134-amino-acid chain; its full sequence is Small ribosomal subunit protein uS11 (134 aa).

Residues 1–24 (MATKMAGVKRAGRKRKERKNIERG) are disordered.

This sequence belongs to the universal ribosomal protein uS11 family. Part of the 30S ribosomal subunit. Interacts with proteins S7 and S18. Binds to IF-3.

Located on the platform of the 30S subunit, it bridges several disparate RNA helices of the 16S rRNA. Forms part of the Shine-Dalgarno cleft in the 70S ribosome. The polypeptide is Small ribosomal subunit protein uS11 (Acetivibrio thermocellus (strain ATCC 27405 / DSM 1237 / JCM 9322 / NBRC 103400 / NCIMB 10682 / NRRL B-4536 / VPI 7372) (Clostridium thermocellum)).